Here is a 486-residue protein sequence, read N- to C-terminus: Malonate-semialdehyde dehydrogenase (486 aa).

The NAD(+) site is built by Phe154, Lys178, Glu181, Arg182, and Ser231. The active-site Nucleophile is the Cys286. NAD(+) is bound at residue Glu386.

Belongs to the aldehyde dehydrogenase family. IolA subfamily. As to quaternary structure, homotetramer.

It carries out the reaction 3-oxopropanoate + NAD(+) + CoA + H2O = hydrogencarbonate + acetyl-CoA + NADH + H(+). It catalyses the reaction 2-methyl-3-oxopropanoate + NAD(+) + CoA + H2O = propanoyl-CoA + hydrogencarbonate + NADH + H(+). The protein operates within polyol metabolism; myo-inositol degradation into acetyl-CoA; acetyl-CoA from myo-inositol: step 7/7. Catalyzes the oxidation of malonate semialdehyde (MSA) and methylmalonate semialdehyde (MMSA) into acetyl-CoA and propanoyl-CoA, respectively. Is involved in a myo-inositol catabolic pathway. Bicarbonate, and not CO2, is the end-product of the enzymatic reaction. The protein is Malonate-semialdehyde dehydrogenase of Bacillus cytotoxicus (strain DSM 22905 / CIP 110041 / 391-98 / NVH 391-98).